Reading from the N-terminus, the 504-residue chain is Ribose import ATP-binding protein RbsA (504 aa).

ABC transporter domains follow at residues 6–242 (LELK…VGRR) and 252–495 (VRHG…VGKT). 38 to 45 (GENGAGKS) contributes to the ATP binding site.

The protein belongs to the ABC transporter superfamily. Ribose importer (TC 3.A.1.2.1) family. In terms of assembly, the complex is composed of an ATP-binding protein (RbsA), two transmembrane proteins (RbsC) and a solute-binding protein (RbsB).

Its subcellular location is the cell inner membrane. It carries out the reaction D-ribose(out) + ATP + H2O = D-ribose(in) + ADP + phosphate + H(+). Part of the ABC transporter complex RbsABC involved in ribose import. Responsible for energy coupling to the transport system. The polypeptide is Ribose import ATP-binding protein RbsA (Photobacterium profundum (strain SS9)).